We begin with the raw amino-acid sequence, 205 residues long: Heme ligase (205 aa).

The FAS1 domain occupies 48-203 (KRTIINLIYS…GVVHIVDKPI (156 aa)). Residues 154-172 (LRNLLNNDLIVKIEGEFKH) form a required for binding to host hemoglobin region. 2 heme binding domain regions span residues 171 to 181 (KHCNHSIYLNG) and 191 to 200 (CHNGVVHIVD).

As to quaternary structure, component of the hemozoin formation complex (HFC) composed of falcipains FP2A and/or FP2B, plasmepsins PMII, PMIII/HAP and PMIV, heme detoxifying protein HDP and falcilysin FLN. The HFC complex is involved in hemoglobin degradation and detoxification of heme in the food vacuole during the asexual blood stage. Interacts with falcipain 2; the interaction is direct and enhances HDP catalytic activity. Interacts with host hemoglobin.

It is found in the vacuole. It localises to the host cytoplasm. Its subcellular location is the host cytosol. It carries out the reaction 2 Fe(III)-heme b = beta-hematin. Functionally, heme detoxifying enzyme that converts heme to crystalline hemozoin (beta-hematin) to protect the organism from the toxic effects of heme. During its development, P.falciparum proteolyzes vast amounts of host hemoglobin, leading to heme release. The protein is Heme ligase of Plasmodium falciparum (isolate 3D7).